Reading from the N-terminus, the 345-residue chain is Myb/SANT-like DNA-binding domain-containing protein 4 (345 aa).

The region spanning 4 to 77 is the Myb-like domain; that stretch reads LKRKRKSNFS…EVKRRYLDWR (74 aa). Lys9 participates in a covalent cross-link: Glycyl lysine isopeptide (Lys-Gly) (interchain with G-Cter in SUMO2). Ser106 carries the post-translational modification Phosphoserine. Glycyl lysine isopeptide (Lys-Gly) (interchain with G-Cter in SUMO2) cross-links involve residues Lys114 and Lys142. Positions 141-175 are disordered; that stretch reads VKVEEEERDPQSPEFEIEEEEEMLSSVIPDSRREN. At Thr188 the chain carries Phosphothreonine. The stretch at 202–344 forms a coiled coil; it reads HLLMNIEKQK…RLRIQKEGHL (143 aa). Glycyl lysine isopeptide (Lys-Gly) (interchain with G-Cter in SUMO2) cross-links involve residues Lys237, Lys254, and Lys273.

The chain is Myb/SANT-like DNA-binding domain-containing protein 4 (Msantd4) from Rattus norvegicus (Rat).